The chain runs to 154 residues: Ascorbate-specific PTS system EIIA component (154 aa).

The region spanning 6 to 150 (SLAENNSIRL…QEVLDLIDRT (145 aa)) is the PTS EIIA type-2 domain. Catalysis depends on H68, which acts as the Tele-phosphohistidine intermediate. H68 bears the Phosphohistidine mark.

Its subcellular location is the cytoplasm. Functionally, the phosphoenolpyruvate-dependent sugar phosphotransferase system (sugar PTS), a major carbohydrate active transport system, catalyzes the phosphorylation of incoming sugar substrates concomitantly with their translocation across the cell membrane. The enzyme II UlaABC PTS system is involved in ascorbate transport. This is Ascorbate-specific PTS system EIIA component (ulaC) from Salmonella choleraesuis (strain SC-B67).